The following is a 1606-amino-acid chain: E3 ubiquitin-protein ligase HECW1 (1606 aa).

Residues 182–318 (SAAPIFKSIG…LERHAIGDRV (137 aa)) enclose the C2 domain. Disordered stretches follow at residues 349–418 (DDEE…PAEE), 459–538 (AEQL…CSLP), 566–672 (LLHS…SCEG), and 730–815 (STVF…SQLP). Residues 354–373 (SLSTEPESAQIQDSPMNNLM) show a composition bias toward polar residues. Basic and acidic residues predominate over residues 380–392 (PRSEAPESSESWK). 2 stretches are compositionally biased toward acidic residues: residues 500 to 511 (EEEEKEQEEEGD) and 579 to 588 (AEEEDGAEEE). Positions 589–600 (STLKDSSEKDGL) are enriched in basic and acidic residues. The segment covering 612–621 (ALEEDREEPE) has biased composition (acidic residues). 3 stretches are compositionally biased toward polar residues: residues 651 to 663 (HPST…SSPR), 751 to 765 (DSMQ…STNG), and 806 to 815 (HNSQPVSQLP). The WW 1 domain maps to 829 to 862 (EPLPPNWEARIDSHGRVFYVDHVNRTTTWQRPTA). Positions 870–901 (RRSGSIQQMEQLNRRYQNIQRTIATERSEEDS) form a coiled coil. Residues serine 874, serine 937, and serine 939 each carry the phosphoserine modification. Residues 894–938 (TERSEEDSGSQSCEQAPAGGGGGGGSDSEAESSQSSLDLRREGSL) are disordered. Residues 1018 to 1051 (LELPRGWEIKTDQQGKSFFVDHNSRATTFIDPRI) enclose the WW 2 domain. Residues 1271–1606 (SRKELQRNKL…VEETSTFGLE (336 aa)) form the HECT domain. Cysteine 1574 (glycyl thioester intermediate) is an active-site residue.

As to quaternary structure, interacts with DVL1 and SSR3. Also interacts with mutant SOD1. Predominantly expressed in neurons of adult and fetal brain. Weakly expressed in the kidney.

The protein localises to the cytoplasm. The catalysed reaction is S-ubiquitinyl-[E2 ubiquitin-conjugating enzyme]-L-cysteine + [acceptor protein]-L-lysine = [E2 ubiquitin-conjugating enzyme]-L-cysteine + N(6)-ubiquitinyl-[acceptor protein]-L-lysine.. It participates in protein modification; protein ubiquitination. Its function is as follows. E3 ubiquitin-protein ligase that mediates ubiquitination and subsequent degradation of DVL1. Also targets the mutant SOD1 protein involved in familial amyotrophic lateral sclerosis (FALS). Forms cytotoxic aggregates with DVL1, SSR3 and mutant SOD1 that lead to motor neuron death in FALS. This chain is E3 ubiquitin-protein ligase HECW1 (HECW1), found in Homo sapiens (Human).